The primary structure comprises 286 residues: Transmembrane protein 156 (286 aa).

Residues Met-1 to Thr-4 are Cytoplasmic-facing. The chain crosses the membrane as a helical span at residues Ala-5 to Phe-25. The Extracellular segment spans residues Lys-26–Thr-214. Asn-45, Asn-54, Asn-76, and Asn-142 each carry an N-linked (GlcNAc...) asparagine glycan. A helical transmembrane segment spans residues Trp-215–Leu-235. The Cytoplasmic portion of the chain corresponds to Glu-236 to Glu-286.

Its subcellular location is the membrane. This Rattus norvegicus (Rat) protein is Transmembrane protein 156 (Tmem156).